The primary structure comprises 1580 residues: Endoribonuclease Dicer homolog 3 (1580 aa).

A compositionally biased stretch (basic and acidic residues) spans 1 to 12 (MHSSLEPEKMEE). The segment at 1–22 (MHSSLEPEKMEEGGGSNSLKRK) is disordered. Residues 51-223 (VYEVAKNRNI…SPSNYAAQVS (173 aa)) form the Helicase ATP-binding domain. Residue 64–71 (LGTGIDKS) coordinates ATP. The DECH box motif lies at 170–173 (DECH). Positions 394–562 (KLKELFHLLD…SCPPPVKNGH (169 aa)) constitute a Helicase C-terminal domain. A compositionally biased stretch (polar residues) spans 581–597 (EEAASTQTMSDPPSRNE). Disordered stretches follow at residues 581 to 601 (EEAA…QLPP) and 613 to 638 (QSNG…KKRK). Over residues 622-633 (SSKSKSSSSAAG) the composition is skewed to low complexity. The PAZ domain maps to 836-960 (NLIHFANASS…LPPELLARID (125 aa)). 2 consecutive RNase III domains span residues 985–1157 (ASQL…VSGG) and 1198–1340 (LIEL…IDTR). Residues Glu-1234, Asp-1326, and Glu-1329 each contribute to the Mg(2+) site.

It belongs to the helicase family. Dicer subfamily. Interacts with DRB2 and DRB5. Mg(2+) is required as a cofactor. The cofactor is Mn(2+).

It is found in the nucleus. The protein localises to the nucleolus. In terms of biological role, ribonuclease (RNase) III involved in RNA-mediated post-transcriptional gene silencing (PTGS). Involved in the processing of repeat-associated small interfering RNAs (ra-siRNAs, derived from heterochromatin and DNA repeats such as transposons) by cleaving small dsRNAs into 24 nucleotide ra-siRNAs. Plays a role in antiviral RNA silencing. Involved in the production of viral siRNAs derived from the cabbage leaf curl virus (CaLCuV) and tobacco rattle virus (TRV). Targeted by the viral silencing suppressor (VSR) protein 2b of the cucumber mosaic virus (CMV) that inactivates DCL3 function in RNA silencing. Acts redundantly with DICER-LIKE 1 (DCL1) to promote flowering via repression of FLOWERING LOCUS C (FLC). Does not seem to be involved in microRNAs (miRNAs) processing. This is Endoribonuclease Dicer homolog 3 (DCL3) from Arabidopsis thaliana (Mouse-ear cress).